The following is a 525-amino-acid chain: cAMP-dependent protein kinase regulatory subunit (525 aa).

The tract at residues 28–213 (QFCANWFNSK…RIRGSIGNNL (186 aa)) is dimerization and phosphorylation. Disordered regions lie at residues 114 to 146 (MDAS…SSLG) and 170 to 196 (SVSA…TVIP). Residues 124 to 146 (PAPATPAAPAAPAAPAAPFSSLG) show a composition bias toward low complexity. Ser-170 bears the Phosphoserine; by autocatalysis mark. A nucleoside 3',5'-cyclic phosphate contacts are provided by residues 214–345 (LFRN…FLMD) and 348–472 (LFER…TYGD). 3',5'-cyclic AMP is bound by residues Glu-295, Arg-304, and Glu-417. A disordered region spans residues 497-525 (SGADTSFPHPMDSSAKPGEGAWSAPNPFA).

Belongs to the cAMP-dependent kinase regulatory chain family. As to quaternary structure, tetramer, composed of 2 regulatory (R) and 2 catalytic (C) subunits. In the presence of cAMP it dissociates into 2 active monomeric C subunits and an R dimer.

The protein is cAMP-dependent protein kinase regulatory subunit (PKAR) of Mycosarcoma maydis (Corn smut fungus).